The sequence spans 535 residues: Peptide chain release factor 3 (535 aa).

The region spanning Ala8–Gly276 is the tr-type G domain. Residues Ser17–Thr24, Asp85–His89, and Asn139–Asp142 contribute to the GTP site.

It belongs to the TRAFAC class translation factor GTPase superfamily. Classic translation factor GTPase family. PrfC subfamily.

It localises to the cytoplasm. Increases the formation of ribosomal termination complexes and stimulates activities of RF-1 and RF-2. It binds guanine nucleotides and has strong preference for UGA stop codons. It may interact directly with the ribosome. The stimulation of RF-1 and RF-2 is significantly reduced by GTP and GDP, but not by GMP. This Bordetella petrii (strain ATCC BAA-461 / DSM 12804 / CCUG 43448) protein is Peptide chain release factor 3.